The primary structure comprises 425 residues: MKLIKNGKILKNGILKDTEILIDGKRIKQISSKINASSSNIEVIDAKGNLIAPGFVDVHVHLREPGGEHKETIESGTKAAARGGFTTVCPMPNTRPVPDTVEHVRELRQRISETAQVRVLPYAAITKRQAGTELVDFEKLALEGVFAFTDDGVGVQTASMMYAAMKQAAKVKKPIVAHCEDNSLIYGGAMHKGKRSEELGIPGIPNIAESVQIARDVLLAEATGCHYHVCHVSTKESVRVIRDAKKAGIHVTAEVTPHHLLLTENDVPGDDSNYKMNPPLRSNEDREALLEGLLDGTIDCIATDHAPHAKEEKEQPMTKAPFGIVGSETAFPLLYTHFVRRGNWSLQQLVDYFTIKPATIFNLNYGKLHKDSYADLTIIDLNTEKEIKSEDFLSKADNTPFIGEKVYGNPTLTMLKGEVVFEEEK.

Zn(2+) is bound by residues His-59 and His-61. Residues His-61 to Arg-63 and Asn-93 each bind substrate. 3 residues coordinate Zn(2+): Asp-151, His-178, and His-231. Asn-277 provides a ligand contact to substrate. Asp-304 provides a ligand contact to Zn(2+). Asp-304 is a catalytic residue. Substrate contacts are provided by residues His-308 and Phe-322 to Gly-323.

It belongs to the metallo-dependent hydrolases superfamily. DHOase family. Class I DHOase subfamily. It depends on Zn(2+) as a cofactor.

The enzyme catalyses (S)-dihydroorotate + H2O = N-carbamoyl-L-aspartate + H(+). It participates in pyrimidine metabolism; UMP biosynthesis via de novo pathway; (S)-dihydroorotate from bicarbonate: step 3/3. Its function is as follows. Catalyzes the reversible cyclization of carbamoyl aspartate to dihydroorotate. The protein is Dihydroorotase of Staphylococcus epidermidis (strain ATCC 35984 / DSM 28319 / BCRC 17069 / CCUG 31568 / BM 3577 / RP62A).